The sequence spans 883 residues: Phosphoenolpyruvate carboxylase (883 aa).

Catalysis depends on residues His138 and Lys546.

It belongs to the PEPCase type 1 family. Mg(2+) serves as cofactor.

It catalyses the reaction oxaloacetate + phosphate = phosphoenolpyruvate + hydrogencarbonate. In terms of biological role, forms oxaloacetate, a four-carbon dicarboxylic acid source for the tricarboxylic acid cycle. This chain is Phosphoenolpyruvate carboxylase, found in Escherichia coli O7:K1 (strain IAI39 / ExPEC).